Here is a 483-residue protein sequence, read N- to C-terminus: Trehalose-6-phosphate synthase (483 aa).

A D-glucose 6-phosphate-binding site is contributed by arginine 22. 42–43 serves as a coordination point for UDP-alpha-D-glucose; it reads GG. Residues tyrosine 94 and aspartate 148 each coordinate D-glucose 6-phosphate. UDP-alpha-D-glucose is bound by residues arginine 290 and lysine 295. Arginine 328 serves as a coordination point for D-glucose 6-phosphate. 393 to 397 is a binding site for UDP-alpha-D-glucose; that stretch reads LVAKE.

It belongs to the glycosyltransferase 20 family. Homotetramer.

It carries out the reaction ADP-alpha-D-glucose + D-glucose 6-phosphate = alpha,alpha-trehalose 6-phosphate + ADP + H(+). The enzyme catalyses CDP-alpha-D-glucose + D-glucose 6-phosphate = alpha,alpha-trehalose 6-phosphate + CDP + H(+). The catalysed reaction is GDP-alpha-D-glucose + D-glucose 6-phosphate = alpha,alpha-trehalose 6-phosphate + GDP + H(+). It catalyses the reaction TDP-alpha-D-glucose + D-glucose 6-phosphate = 5-methyl-UDP + alpha,alpha-trehalose 6-phosphate + H(+). It carries out the reaction D-glucose 6-phosphate + UDP-alpha-D-glucose = alpha,alpha-trehalose 6-phosphate + UDP + H(+). The protein operates within glycan biosynthesis; trehalose biosynthesis. In terms of biological role, probably involved in the osmoprotection via the biosynthesis of trehalose and in the production of glycogen and alpha-glucan via the TreS-Pep2 branch involved in the biosynthesis of maltose-1-phosphate (M1P). Catalyzes the transfer of glucose from UDP-glucose (UDP-Glc) to D-glucose 6-phosphate (Glc-6-P) to form trehalose-6-phosphate. Probably also able to use ADP-Glc, CDP-Glc, GDP-Glc and TDP-Glc as glucosyl donors. The chain is Trehalose-6-phosphate synthase from Mycobacterium sp. (strain JLS).